The following is a 305-amino-acid chain: 4-diphosphocytidyl-2-C-methyl-D-erythritol kinase (305 aa).

Lys-10 is a catalytic residue. Position 95–105 (95–105 (PVTAGLGGGSS)) interacts with ATP. Asp-136 is an active-site residue. The disordered stretch occupies residues 286-305 (PGVTPWRSPRSASSPSTKRS). A compositionally biased stretch (low complexity) spans 290 to 305 (PWRSPRSASSPSTKRS).

This sequence belongs to the GHMP kinase family. IspE subfamily.

The catalysed reaction is 4-CDP-2-C-methyl-D-erythritol + ATP = 4-CDP-2-C-methyl-D-erythritol 2-phosphate + ADP + H(+). The protein operates within isoprenoid biosynthesis; isopentenyl diphosphate biosynthesis via DXP pathway; isopentenyl diphosphate from 1-deoxy-D-xylulose 5-phosphate: step 3/6. Catalyzes the phosphorylation of the position 2 hydroxy group of 4-diphosphocytidyl-2C-methyl-D-erythritol. The polypeptide is 4-diphosphocytidyl-2-C-methyl-D-erythritol kinase (Anaeromyxobacter sp. (strain Fw109-5)).